A 251-amino-acid polypeptide reads, in one-letter code: Zwei Ig domain protein zig-3 (251 aa).

An N-terminal signal peptide occupies residues 1 to 19 (MLLICISVLAAISAHPLSS). Ig-like C2-type domains follow at residues 42–144 (PSLK…AKIS) and 160–244 (PVIT…TFLY). Intrachain disulfides connect cysteine 65/cysteine 128 and cysteine 181/cysteine 228.

In terms of tissue distribution, expressed in PVT, AIM and ASI neurons, in vulva and weakly in body wall muscles.

The protein resides in the secreted. Required for maintaining axon position of PVQ and PVP neurons postembryonically in the ventral nerve cord (VNC) by preventing axons drifting into the opposite side of the VNC that could occur during body growth and movement. In Caenorhabditis elegans, this protein is Zwei Ig domain protein zig-3.